Here is a 319-residue protein sequence, read N- to C-terminus: Acetyl esterase (319 aa).

The Involved in the stabilization of the negatively charged intermediate by the formation of the oxyanion hole motif lies at 91–93 (HGG). Active-site residues include serine 165, aspartate 262, and histidine 292.

The protein belongs to the 'GDXG' lipolytic enzyme family. In terms of assembly, homodimer. Interacts with MalT and MelA.

It localises to the cytoplasm. Functionally, displays esterase activity towards short chain fatty esters (acyl chain length of up to 8 carbons). Able to hydrolyze triacetylglycerol (triacetin) and tributyrylglycerol (tributyrin), but not trioleylglycerol (triolein) or cholesterol oleate. Negatively regulates MalT activity by antagonizing maltotriose binding. Inhibits MelA galactosidase activity. This is Acetyl esterase from Shigella flexneri serotype 5b (strain 8401).